The chain runs to 34 residues: Photosystem II reaction center protein Psb30 (34 aa).

Residues 6–26 (IVAQLLSLALVTLSGPAVIFL) form a helical membrane-spanning segment.

This sequence belongs to the Psb30/Ycf12 family. In terms of assembly, PSII is composed of 1 copy each of membrane proteins PsbA, PsbB, PsbC, PsbD, PsbE, PsbF, PsbH, PsbI, PsbJ, PsbK, PsbL, PsbM, PsbT, PsbX, PsbY, PsbZ, Psb30/Ycf12, peripheral proteins of the oxygen-evolving complex and a large number of cofactors. It forms dimeric complexes.

It localises to the plastid. It is found in the chloroplast thylakoid membrane. Functionally, a core subunit of photosystem II (PSII), probably helps stabilize the reaction center. The polypeptide is Photosystem II reaction center protein Psb30 (Emiliania huxleyi (Coccolithophore)).